A 397-amino-acid polypeptide reads, in one-letter code: Lymphoid enhancer-binding factor 1 (397 aa).

A CTNNB1-binding region spans residues 1–60 (MPQLSGGGGGGDPELCATDEMIPFKDEGDPQKEKIFAEISHPEEEGDLADIKSSLVNESE). Residue lysine 25 forms a Glycyl lysine isopeptide (Lys-Gly) (interchain with G-Cter in SUMO) linkage. The segment at 38-102 (EISHPEEEGD…KHPDGGLYNK (65 aa)) is disordered. Over residues 80–96 (PYHDKAREHPDDGKHPD) the composition is skewed to basic and acidic residues. The residue at position 130 (serine 130) is a Phosphoserine. Threonine 153 carries the phosphothreonine; by NLK modification. Serine 164 carries the phosphoserine; by NLK modification. Disordered regions lie at residues 164–190 (SPGSHPSHIPSEVNPKQGMSRHPPAPE) and 266–296 (VKQEHPHTDSDLMHVKPEHEQRKEQEPKRPH). Residue lysine 267 forms a Glycyl lysine isopeptide (Lys-Gly) (interchain with G-Cter in SUMO) linkage. Over residues 267-294 (KQEHPHTDSDLMHVKPEHEQRKEQEPKR) the composition is skewed to basic and acidic residues. The HMG box DNA-binding region spans 297–365 (IKKPLNAFML…LHMQLYPGWS (69 aa)). The segment at 367 to 397 (RDNYGKKKKRKREKLQESTSGTGPRMTAAYI) is disordered.

This sequence belongs to the TCF/LEF family. Binds the armadillo repeat of CTNNB1 and forms a stable complex. Interacts with TLE1, PIASG, ALYREF/THOC4, EP300, MDFI and MDFIC. Interacts with DAZAP2. Post-translationally, phosphorylated at Thr-153 and/or Ser-164 by NLK. Phosphorylation by NLK at these sites represses LEF1-mediated transcriptional activation of target genes of the canonical Wnt signaling pathway.

The protein localises to the nucleus. Functionally, transcription factor that binds DNA in a sequence-specific manner. Participates in the Wnt signaling pathway. Activates transcription of target genes in the presence of CTNNB1 and EP300. PIASG antagonizes both Wnt-dependent and Wnt-independent activation by LEF1. TLE1, TLE2, TLE3 and TLE4 repress transactivation mediated by LEF1 and CTNNB1. Regulates T-cell receptor alpha enhancer function. Required for IL17A expressing gamma-delta T-cell maturation and development, via binding to regulator loci of BLK to modulate expression. Acts as a positive regulator of odontoblast differentiation during mesenchymal tooth germ formation, expression is repressed during the bell stage by MSX1-mediated inhibition of CTNNB1 signaling. May play a role in hair cell differentiation and follicle morphogenesis. This is Lymphoid enhancer-binding factor 1 from Rattus norvegicus (Rat).